The chain runs to 281 residues: 2-dehydro-3-deoxyphosphooctonate aldolase (281 aa).

It belongs to the KdsA family.

It is found in the cytoplasm. It carries out the reaction D-arabinose 5-phosphate + phosphoenolpyruvate + H2O = 3-deoxy-alpha-D-manno-2-octulosonate-8-phosphate + phosphate. Its pathway is carbohydrate biosynthesis; 3-deoxy-D-manno-octulosonate biosynthesis; 3-deoxy-D-manno-octulosonate from D-ribulose 5-phosphate: step 2/3. It participates in bacterial outer membrane biogenesis; lipopolysaccharide biosynthesis. The sequence is that of 2-dehydro-3-deoxyphosphooctonate aldolase from Marinobacter nauticus (strain ATCC 700491 / DSM 11845 / VT8) (Marinobacter aquaeolei).